Consider the following 358-residue polypeptide: S-adenosylmethionine decarboxylase proenzyme (358 aa).

Active-site residues include Glu11 and Glu14. Residue Ser71 is the Schiff-base intermediate with substrate; via pyruvic acid of the active site. Position 71 is a pyruvic acid (Ser); by autocatalysis (Ser71). The Proton donor; for catalytic activity role is filled by Cys85. Residues Ser234 and His247 each act as proton acceptor; for processing activity in the active site.

Belongs to the eukaryotic AdoMetDC family. It depends on pyruvate as a cofactor. Is synthesized initially as an inactive proenzyme. Formation of the active enzyme involves a self-maturation process in which the active site pyruvoyl group is generated from an internal serine residue via an autocatalytic post-translational modification. Two non-identical subunits are generated from the proenzyme in this reaction, and the pyruvate is formed at the N-terminus of the alpha chain, which is derived from the carboxyl end of the proenzyme. The post-translation cleavage follows an unusual pathway, termed non-hydrolytic serinolysis, in which the side chain hydroxyl group of the serine supplies its oxygen atom to form the C-terminus of the beta chain, while the remainder of the serine residue undergoes an oxidative deamination to produce ammonia and the pyruvoyl group blocking the N-terminus of the alpha chain.

The enzyme catalyses S-adenosyl-L-methionine + H(+) = S-adenosyl 3-(methylsulfanyl)propylamine + CO2. Its pathway is amine and polyamine biosynthesis; S-adenosylmethioninamine biosynthesis; S-adenosylmethioninamine from S-adenosyl-L-methionine: step 1/1. The protein is S-adenosylmethionine decarboxylase proenzyme (SAMDC) of Solanum chilense (Tomato).